The primary structure comprises 224 residues: Glutathione peroxidase 3 (224 aa).

The first 18 residues, 1-18, serve as a signal peptide directing secretion; sequence MAPGSVLSLAVALATIIG. Asn38 is a glycosylation site (N-linked (GlcNAc...) asparagine). Residue Cys73 is part of the active site.

The protein belongs to the glutathione peroxidase family.

It is found in the secreted. It localises to the extracellular space. The enzyme catalyses 2 glutathione + H2O2 = glutathione disulfide + 2 H2O. In Caenorhabditis elegans, this protein is Glutathione peroxidase 3 (gpx-3).